The following is a 272-amino-acid chain: tRNA pseudouridine synthase B (272 aa).

Residue D38 is the Nucleophile of the active site.

Belongs to the pseudouridine synthase TruB family. Type 1 subfamily.

It carries out the reaction uridine(55) in tRNA = pseudouridine(55) in tRNA. In terms of biological role, responsible for synthesis of pseudouridine from uracil-55 in the psi GC loop of transfer RNAs. The sequence is that of tRNA pseudouridine synthase B from Campylobacter jejuni subsp. jejuni serotype O:6 (strain 81116 / NCTC 11828).